Reading from the N-terminus, the 482-residue chain is UDP-N-acetylmuramate--L-alanine ligase (482 aa).

129–135 (GTHGKTT) is an ATP binding site.

The protein belongs to the MurCDEF family.

The protein resides in the cytoplasm. It catalyses the reaction UDP-N-acetyl-alpha-D-muramate + L-alanine + ATP = UDP-N-acetyl-alpha-D-muramoyl-L-alanine + ADP + phosphate + H(+). It functions in the pathway cell wall biogenesis; peptidoglycan biosynthesis. Its function is as follows. Cell wall formation. This Acinetobacter baumannii (strain AB307-0294) protein is UDP-N-acetylmuramate--L-alanine ligase.